The sequence spans 113 residues: uncharacterized protein (113 aa).

Positions 1–22 (MCRFPTFLLIAIAITMLPTILS) are cleaved as a signal peptide. A glycan (N-linked (GlcNAc...) asparagine) is linked at Asn-47.

The protein localises to the secreted. This is an uncharacterized protein from Caenorhabditis elegans.